A 457-amino-acid chain; its full sequence is Siroheme synthase (457 aa).

The interval 1-204 (MDHLPIFCQL…NDQKAITETT (204 aa)) is precorrin-2 dehydrogenase /sirohydrochlorin ferrochelatase. NAD(+) contacts are provided by residues 22–23 (DV) and 43–44 (LA). A Phosphoserine modification is found at Ser128. Residues 216-457 (GEVVLVGAGP…RDKLNWFSNH (242 aa)) form a uroporphyrinogen-III C-methyltransferase region. Pro225 provides a ligand contact to S-adenosyl-L-methionine. Asp248 serves as the catalytic Proton acceptor. The active-site Proton donor is the Lys270. S-adenosyl-L-methionine is bound by residues 301-303 (GGD), Ile306, 331-332 (TA), Met382, and Gly411.

It in the N-terminal section; belongs to the precorrin-2 dehydrogenase / sirohydrochlorin ferrochelatase family. In the C-terminal section; belongs to the precorrin methyltransferase family.

It catalyses the reaction uroporphyrinogen III + 2 S-adenosyl-L-methionine = precorrin-2 + 2 S-adenosyl-L-homocysteine + H(+). The catalysed reaction is precorrin-2 + NAD(+) = sirohydrochlorin + NADH + 2 H(+). It carries out the reaction siroheme + 2 H(+) = sirohydrochlorin + Fe(2+). Its pathway is cofactor biosynthesis; adenosylcobalamin biosynthesis; precorrin-2 from uroporphyrinogen III: step 1/1. It participates in cofactor biosynthesis; adenosylcobalamin biosynthesis; sirohydrochlorin from precorrin-2: step 1/1. It functions in the pathway porphyrin-containing compound metabolism; siroheme biosynthesis; precorrin-2 from uroporphyrinogen III: step 1/1. The protein operates within porphyrin-containing compound metabolism; siroheme biosynthesis; siroheme from sirohydrochlorin: step 1/1. Its pathway is porphyrin-containing compound metabolism; siroheme biosynthesis; sirohydrochlorin from precorrin-2: step 1/1. Multifunctional enzyme that catalyzes the SAM-dependent methylations of uroporphyrinogen III at position C-2 and C-7 to form precorrin-2 via precorrin-1. Then it catalyzes the NAD-dependent ring dehydrogenation of precorrin-2 to yield sirohydrochlorin. Finally, it catalyzes the ferrochelation of sirohydrochlorin to yield siroheme. The polypeptide is Siroheme synthase (Shigella flexneri).